A 157-amino-acid polypeptide reads, in one-letter code: ATP synthase subunit b (157 aa).

A helical transmembrane segment spans residues 7–29 (LVSQAIAFSIFIWFTTKFVWPYL).

The protein belongs to the ATPase B chain family. In terms of assembly, F-type ATPases have 2 components, F(1) - the catalytic core - and F(0) - the membrane proton channel. F(1) has five subunits: alpha(3), beta(3), gamma(1), delta(1), epsilon(1). F(0) has three main subunits: a(1), b(2) and c(10-14). The alpha and beta chains form an alternating ring which encloses part of the gamma chain. F(1) is attached to F(0) by a central stalk formed by the gamma and epsilon chains, while a peripheral stalk is formed by the delta and b chains.

The protein resides in the cell inner membrane. Its function is as follows. F(1)F(0) ATP synthase produces ATP from ADP in the presence of a proton or sodium gradient. F-type ATPases consist of two structural domains, F(1) containing the extramembraneous catalytic core and F(0) containing the membrane proton channel, linked together by a central stalk and a peripheral stalk. During catalysis, ATP synthesis in the catalytic domain of F(1) is coupled via a rotary mechanism of the central stalk subunits to proton translocation. In terms of biological role, component of the F(0) channel, it forms part of the peripheral stalk, linking F(1) to F(0). This is ATP synthase subunit b from Nitrosomonas eutropha (strain DSM 101675 / C91 / Nm57).